We begin with the raw amino-acid sequence, 304 residues long: Protein ML (304 aa).

Its function is as follows. Blocks host IRF3 and IRF7, thereby inhibiting IFN-beta expression and activation of host antiviral state. The protein is Protein ML of Thogoto virus (isolate SiAr 126) (Tho).